The chain runs to 159 residues: MNISIPQIIAAILNFIILLLIVKHFWFDKITAVVDSRQSEIINKIEDTDKNQKLALELKEKNELELGNAKKQGKTIVEEYKSKAENVYEDIVKEAHEEADRIIKKSRLEAERQKKNAEEEIRAEAVELAVLVSSKTLEKTIDDLEHRRLIKDFISKVGI.

A helical transmembrane segment spans residues 2 to 22 (NISIPQIIAAILNFIILLLIV).

Belongs to the ATPase B chain family. As to quaternary structure, F-type ATPases have 2 components, F(1) - the catalytic core - and F(0) - the membrane proton channel. F(1) has five subunits: alpha(3), beta(3), gamma(1), delta(1), epsilon(1). F(0) has three main subunits: a(1), b(2) and c(10-14). The alpha and beta chains form an alternating ring which encloses part of the gamma chain. F(1) is attached to F(0) by a central stalk formed by the gamma and epsilon chains, while a peripheral stalk is formed by the delta and b chains.

The protein localises to the cell membrane. Functionally, f(1)F(0) ATP synthase produces ATP from ADP in the presence of a proton or sodium gradient. F-type ATPases consist of two structural domains, F(1) containing the extramembraneous catalytic core and F(0) containing the membrane proton channel, linked together by a central stalk and a peripheral stalk. During catalysis, ATP synthesis in the catalytic domain of F(1) is coupled via a rotary mechanism of the central stalk subunits to proton translocation. Component of the F(0) channel, it forms part of the peripheral stalk, linking F(1) to F(0). This chain is ATP synthase subunit b, found in Clostridium botulinum (strain Loch Maree / Type A3).